The primary structure comprises 151 residues: Aspartate carbamoyltransferase regulatory chain (151 aa).

Zn(2+) contacts are provided by Cys108, Cys113, Cys138, and Cys141.

Belongs to the PyrI family. In terms of assembly, contains catalytic and regulatory chains. Zn(2+) is required as a cofactor.

Its function is as follows. Involved in allosteric regulation of aspartate carbamoyltransferase. This is Aspartate carbamoyltransferase regulatory chain from Pyrobaculum islandicum (strain DSM 4184 / JCM 9189 / GEO3).